The chain runs to 142 residues: Nucleoside diphosphate kinase (142 aa).

ATP-binding residues include K11, F59, R87, T93, R104, and N114. H117 (pros-phosphohistidine intermediate) is an active-site residue.

This sequence belongs to the NDK family. Homotetramer. Mg(2+) serves as cofactor.

The protein resides in the cytoplasm. It carries out the reaction a 2'-deoxyribonucleoside 5'-diphosphate + ATP = a 2'-deoxyribonucleoside 5'-triphosphate + ADP. It catalyses the reaction a ribonucleoside 5'-diphosphate + ATP = a ribonucleoside 5'-triphosphate + ADP. In terms of biological role, major role in the synthesis of nucleoside triphosphates other than ATP. The ATP gamma phosphate is transferred to the NDP beta phosphate via a ping-pong mechanism, using a phosphorylated active-site intermediate. This chain is Nucleoside diphosphate kinase, found in Pectobacterium carotovorum subsp. carotovorum (strain PC1).